The following is a 486-amino-acid chain: UDP-N-acetylmuramate--L-alanine ligase (486 aa).

An ATP-binding site is contributed by G129–T135.

This sequence belongs to the MurCDEF family.

The protein localises to the cytoplasm. It carries out the reaction UDP-N-acetyl-alpha-D-muramate + L-alanine + ATP = UDP-N-acetyl-alpha-D-muramoyl-L-alanine + ADP + phosphate + H(+). It functions in the pathway cell wall biogenesis; peptidoglycan biosynthesis. In terms of biological role, cell wall formation. The polypeptide is UDP-N-acetylmuramate--L-alanine ligase (Vibrio atlanticus (strain LGP32) (Vibrio splendidus (strain Mel32))).